A 137-amino-acid polypeptide reads, in one-letter code: Phospholipase A2 homolog PLA2-03 (137 aa).

The N-terminal stretch at 1 to 16 (MRTLWIVAVLLVGVEG) is a signal peptide. 7 disulfide bridges follow: Cys42–Cys131, Cys44–Cys60, Cys59–Cys111, Cys65–Cys137, Cys66–Cys104, Cys73–Cys97, and Cys91–Cys102. An important for membrane-damaging activities in eukaryotes and bacteria; heparin-binding region spans residues 121–133 (KKYKIFPKFLCKK).

The protein belongs to the phospholipase A2 family. Group II subfamily. K49 sub-subfamily. As to expression, expressed by the venom gland.

The protein localises to the secreted. Snake venom phospholipase A2 homolog that lacks enzymatic activity. Is myotoxic and displays edema-inducing activities in mouse paw. A model of myotoxic mechanism has been proposed: an apo Lys49-PLA2 is activated by the entrance of a hydrophobic molecule (e.g. fatty acid) at the hydrophobic channel of the protein leading to a reorientation of a monomer. This reorientation causes a transition between 'inactive' to 'active' states, causing alignment of C-terminal and membrane-docking sites (MDoS) side-by-side and putting the membrane-disruption sites (MDiS) in the same plane, exposed to solvent and in a symmetric position for both monomers. The MDoS region stabilizes the toxin on membrane by the interaction of charged residues with phospholipid head groups. Subsequently, the MDiS region destabilizes the membrane with penetration of hydrophobic residues. This insertion causes a disorganization of the membrane, allowing an uncontrolled influx of ions (i.e. calcium and sodium), and eventually triggering irreversible intracellular alterations and cell death. The chain is Phospholipase A2 homolog PLA2-03 from Ovophis okinavensis (Ryukyu Island pit viper).